The chain runs to 433 residues: ASSTNLKDVLAALIPKEQARIKTFRQQHGGTALGQITVDMSYGGMRGMKGLVYETSVLDPDEGIRFRGFSIPECQKLLPKGGXGGEPLPEGLFWLLVTGQIPTGAQVSWLSKEWAKRAALPSHVVTMLDNFPTNLHPMSQLSAAITALNSESNFARAYAEGILRTKYWEMVYESAMDLIAKLPCVAAKIYRNLYRAGSSIGAIDSKLDWSHNFTNMLGYTDAQFTELMRLYLTIHSDHEGGNVSAHTSHLVGSALSDPYLSFAAAMNGLAGPLHGLANQEVLGWLAQLQKAXXXAGADASLRDYIWNTLNSGRVVPGYGHAVLRKTDPRYTCQREFALKHLPGDPMFKLVAQLYKIVPNVLLEQGAAANPWPNVDAHSGVLLQYYGMTEMNYYTVLFGVSRALGVLAQLIWSRALGFPLERPKSMSTDGLIAL.

Active-site residues include histidine 274 and histidine 320. Arginine 329 contributes to the oxaloacetate binding site. Aspartate 375 is a catalytic residue. Residues arginine 401 and arginine 421 each contribute to the oxaloacetate site.

It belongs to the citrate synthase family. Homodimer.

The protein localises to the mitochondrion matrix. It carries out the reaction oxaloacetate + acetyl-CoA + H2O = citrate + CoA + H(+). Its pathway is carbohydrate metabolism; tricarboxylic acid cycle; isocitrate from oxaloacetate: step 1/2. Functionally, key enzyme of the Krebs tricarboxylic acid cycle which catalyzes the synthesis of citrate from acetyl coenzyme A and oxaloacetate. This Gallus gallus (Chicken) protein is Citrate synthase, mitochondrial (CS).